The sequence spans 410 residues: MQTYLVGGAVRDYLLGLPVKDRDWVVVGADAQTMLAQGFQPVGKDFPVFLHPKTHEEYALARTERKTAKGYAGFSFHADKDVTLEQDLMRRDLTINAMAQDADGKIIDPFGGQRDLAAGILRHVSPAFAEDPVRILRAARFAARYGFEIAEETIKLMRQMVENGEADALVAERVWQELAKGLMEKNPRKMIEMLRECGALQVLLPEVDALFGVPQRADYHPEIDSGIHTLMTLQRAADMGLSLPERYAALLHDLGKAKTPPDILPRHHGHDINGVEPVREVNQRLRAPRQCAELAELVCRWHIIFHQVGQLKSQTILNVLKKTDAFRRPERFQTALNVCIADTQGRLNREHTPYPQRAHWLALLEAANQADSGKIAAECRAQGKAHFIAEQIDRARLAQIAPLQKTFRGA.

2 residues coordinate ATP: glycine 8 and arginine 11. CTP-binding residues include glycine 8 and arginine 11. Positions 21 and 23 each coordinate Mg(2+). Residues arginine 91, arginine 137, and arginine 140 each contribute to the ATP site. CTP contacts are provided by arginine 91, arginine 137, and arginine 140. The 102-residue stretch at 225–326 folds into the HD domain; sequence SGIHTLMTLQ…LNVLKKTDAF (102 aa).

It belongs to the tRNA nucleotidyltransferase/poly(A) polymerase family. Bacterial CCA-adding enzyme type 1 subfamily. As to quaternary structure, monomer. Can also form homodimers and oligomers. Mg(2+) is required as a cofactor. It depends on Ni(2+) as a cofactor.

The enzyme catalyses a tRNA precursor + 2 CTP + ATP = a tRNA with a 3' CCA end + 3 diphosphate. It carries out the reaction a tRNA with a 3' CCA end + 2 CTP + ATP = a tRNA with a 3' CCACCA end + 3 diphosphate. Catalyzes the addition and repair of the essential 3'-terminal CCA sequence in tRNAs without using a nucleic acid template. Adds these three nucleotides in the order of C, C, and A to the tRNA nucleotide-73, using CTP and ATP as substrates and producing inorganic pyrophosphate. tRNA 3'-terminal CCA addition is required both for tRNA processing and repair. Also involved in tRNA surveillance by mediating tandem CCA addition to generate a CCACCA at the 3' terminus of unstable tRNAs. While stable tRNAs receive only 3'-terminal CCA, unstable tRNAs are marked with CCACCA and rapidly degraded. This is Multifunctional CCA protein from Neisseria gonorrhoeae (strain ATCC 700825 / FA 1090).